The following is a 205-amino-acid chain: MSKRESSKYKIDRRMGENIWGRPKSPVNRREYGPGQHGQRRKGKLSDFGVQLRAKQKLKGYYGDLREKQFRAIFAEADRRKGDTSENLIGLLESRLDAIVYRAKFVPTVFAARQFVNHGHVTVNGVRVNIGSYRCKAGDVIEVREKSKQLVIVLEAVSLAERDVPDYIEVDHNKMVATFGRVPTLSDVPFPVVMEPHLVVEFYSR.

A compositionally biased stretch (basic and acidic residues) spans 1-16; the sequence is MSKRESSKYKIDRRMG. The segment at 1-46 is disordered; sequence MSKRESSKYKIDRRMGENIWGRPKSPVNRREYGPGQHGQRRKGKLS. The region spanning 94 to 157 is the S4 RNA-binding domain; that stretch reads SRLDAIVYRA…KQLVIVLEAV (64 aa).

Belongs to the universal ribosomal protein uS4 family. In terms of assembly, part of the 30S ribosomal subunit. Contacts protein S5. The interaction surface between S4 and S5 is involved in control of translational fidelity.

One of the primary rRNA binding proteins, it binds directly to 16S rRNA where it nucleates assembly of the body of the 30S subunit. In terms of biological role, with S5 and S12 plays an important role in translational accuracy. In Rhizobium leguminosarum bv. trifolii (strain WSM2304), this protein is Small ribosomal subunit protein uS4.